A 107-amino-acid chain; its full sequence is Putative ankyrin repeat protein RP714 (107 aa).

ANK repeat units follow at residues 7–36, 40–69, and 73–102; these read PPLSPLIIAVLNGNIEYTSELLQNGVDIDV, NGNSALHIAASKGYTKIATMLLLYGATIDA, and ELATPLHYAAANNYKDLTQYLLNMNANKSA.

This Rickettsia prowazekii (strain Madrid E) protein is Putative ankyrin repeat protein RP714.